Consider the following 332-residue polypeptide: 2,3-bisphosphoglycerate-dependent phosphoglycerate mutase 2 (332 aa).

Residues Met-1 to Thr-48 constitute a chloroplast transit peptide. Substrate-binding positions include Arg-85 to Asn-92, Thr-98 to Gly-99, Arg-135, Glu-189 to Tyr-192, Lys-200, Arg-216 to Arg-217, and Gly-260 to Asn-261. The Tele-phosphohistidine intermediate role is filled by His-86. The Proton donor/acceptor role is filled by Glu-189.

Belongs to the phosphoglycerate mutase family. BPG-dependent PGAM subfamily.

Its subcellular location is the plastid. The protein localises to the chloroplast. The catalysed reaction is (2R)-2-phosphoglycerate = (2R)-3-phosphoglycerate. It participates in carbohydrate degradation; glycolysis; pyruvate from D-glyceraldehyde 3-phosphate: step 3/5. Functionally, catalyzes the interconversion of 2-phosphoglycerate and 3-phosphoglycerate. The sequence is that of 2,3-bisphosphoglycerate-dependent phosphoglycerate mutase 2 from Arabidopsis thaliana (Mouse-ear cress).